The chain runs to 629 residues: tRNA uridine 5-carboxymethylaminomethyl modification enzyme MnmG (629 aa).

FAD is bound by residues 15–20 (GAGHAG), V127, and S182. The disordered stretch occupies residues 203-226 (TPPRVKSSTIDYSKTEEQPGDDHP). A compositionally biased stretch (basic and acidic residues) spans 215-226 (SKTEEQPGDDHP). 274 to 288 (GARYCPSIEDKIVRF) contributes to the NAD(+) binding site. Q371 provides a ligand contact to FAD.

This sequence belongs to the MnmG family. As to quaternary structure, homodimer. Heterotetramer of two MnmE and two MnmG subunits. FAD serves as cofactor.

The protein resides in the cytoplasm. In terms of biological role, NAD-binding protein involved in the addition of a carboxymethylaminomethyl (cmnm) group at the wobble position (U34) of certain tRNAs, forming tRNA-cmnm(5)s(2)U34. This chain is tRNA uridine 5-carboxymethylaminomethyl modification enzyme MnmG, found in Listeria monocytogenes serovar 1/2a (strain ATCC BAA-679 / EGD-e).